The primary structure comprises 213 residues: Protein ORF D (213 aa).

In Elephas maximus (Indian elephant), this protein is Protein ORF D.